The primary structure comprises 236 residues: Histone H1 (236 aa).

A compositionally biased stretch (basic and acidic residues) spans 1–10 (MPPKKTETKA). Disordered regions lie at residues 1 to 36 (MPPK…SPST) and 94 to 236 (KGVF…AEKA). The segment covering 11–36 (ADASAAAAPAPAAAPTSAPKTKSPST) has biased composition (low complexity). The H15 domain maps to 36–111 (THASYLDMIT…GPSGGTKLAK (76 aa)). Basic residues predominate over residues 109-122 (LAKKVAKPAPKKAA). The segment covering 123 to 150 (PKKETKEKKPAAAKKEGAAKKETKEKKA) has biased composition (basic and acidic residues). Low complexity predominate over residues 153-162 (AKKAAAPKKA). The span at 165–174 (PKKEVKEKKA) shows a compositional bias: basic and acidic residues. Low complexity predominate over residues 202 to 220 (AKSTAKPAAAKKAAAPKKA). The segment covering 224–236 (KKAEKAEPAAEKA) has biased composition (basic and acidic residues).

This sequence belongs to the histone H1/H5 family.

It is found in the nucleus. It localises to the chromosome. Functionally, could act as an H1-type linker histone. The polypeptide is Histone H1 (hH1) (Neurospora crassa (strain ATCC 24698 / 74-OR23-1A / CBS 708.71 / DSM 1257 / FGSC 987)).